The primary structure comprises 231 residues: 6-phosphogluconolactonase (231 aa).

It belongs to the glucosamine/galactosamine-6-phosphate isomerase family. 6-phosphogluconolactonase subfamily.

The enzyme catalyses 6-phospho-D-glucono-1,5-lactone + H2O = 6-phospho-D-gluconate + H(+). The protein operates within carbohydrate degradation; pentose phosphate pathway; D-ribulose 5-phosphate from D-glucose 6-phosphate (oxidative stage): step 2/3. Its function is as follows. Hydrolysis of 6-phosphogluconolactone to 6-phosphogluconate. This Neisseria meningitidis serogroup A / serotype 4A (strain DSM 15465 / Z2491) protein is 6-phosphogluconolactonase (pgl).